The following is a 134-amino-acid chain: Phospholipase A2 (134 aa).

W8, G10, and G12 together coordinate Ca(2+). 5 cysteine pairs are disulfide-bonded: C9–C31, C30–C70, C37–C63, C61–C95, and C105–C113. Residue N13 is glycosylated (N-linked (GlcNAc...) asparagine). Residue H34 is part of the active site. D35 is a binding site for Ca(2+). D64 is a catalytic residue.

It belongs to the phospholipase A2 family. Group III subfamily. Ca(2+) serves as cofactor. Expressed by the venom gland.

The protein resides in the secreted. It carries out the reaction a 1,2-diacyl-sn-glycero-3-phosphocholine + H2O = a 1-acyl-sn-glycero-3-phosphocholine + a fatty acid + H(+). Functionally, PLA2 catalyzes the calcium-dependent hydrolysis of the 2-acyl groups in 3-sn-phosphoglycerides. The polypeptide is Phospholipase A2 (Apis dorsata (Giant honeybee)).